The chain runs to 247 residues: tRNA (guanine-N(1)-)-methyltransferase (247 aa).

Residues Gly115 and Ile134–Leu139 each bind S-adenosyl-L-methionine.

It belongs to the RNA methyltransferase TrmD family. As to quaternary structure, homodimer.

Its subcellular location is the cytoplasm. The enzyme catalyses guanosine(37) in tRNA + S-adenosyl-L-methionine = N(1)-methylguanosine(37) in tRNA + S-adenosyl-L-homocysteine + H(+). In terms of biological role, specifically methylates guanosine-37 in various tRNAs. The chain is tRNA (guanine-N(1)-)-methyltransferase from Anaeromyxobacter sp. (strain K).